A 469-amino-acid chain; its full sequence is Putative pyridoxal-dependent decarboxylase domain-containing protein 2 (469 aa).

The stretch at 12-40 forms a coiled coil; sequence TLAEMGKNLKEAVKMLEDSQRRTEEENGK. A compositionally biased stretch (basic and acidic residues) spans 28 to 44; the sequence is EDSQRRTEEENGKKLIS. The tract at residues 28–47 is disordered; it reads EDSQRRTEEENGKKLISRDI.

It belongs to the group II decarboxylase family. The cofactor is pyridoxal 5'-phosphate.

The protein is Putative pyridoxal-dependent decarboxylase domain-containing protein 2 (PDXDC2P) of Homo sapiens (Human).